Here is a 465-residue protein sequence, read N- to C-terminus: ATP synthase subunit beta (465 aa).

153-160 serves as a coordination point for ATP; that stretch reads GGAGVGKT.

The protein belongs to the ATPase alpha/beta chains family. In terms of assembly, F-type ATPases have 2 components, CF(1) - the catalytic core - and CF(0) - the membrane proton channel. CF(1) has five subunits: alpha(3), beta(3), gamma(1), delta(1), epsilon(1). CF(0) has three main subunits: a(1), b(2) and c(9-12). The alpha and beta chains form an alternating ring which encloses part of the gamma chain. CF(1) is attached to CF(0) by a central stalk formed by the gamma and epsilon chains, while a peripheral stalk is formed by the delta and b chains.

The protein localises to the cell membrane. The enzyme catalyses ATP + H2O + 4 H(+)(in) = ADP + phosphate + 5 H(+)(out). Its function is as follows. Produces ATP from ADP in the presence of a proton gradient across the membrane. The catalytic sites are hosted primarily by the beta subunits. This is ATP synthase subunit beta from Clostridium perfringens (strain SM101 / Type A).